The following is a 120-amino-acid chain: Large ribosomal subunit protein uL18 (120 aa).

Belongs to the universal ribosomal protein uL18 family. Part of the 50S ribosomal subunit; part of the 5S rRNA/L5/L18/L25 subcomplex. Contacts the 5S and 23S rRNAs.

This is one of the proteins that bind and probably mediate the attachment of the 5S RNA into the large ribosomal subunit, where it forms part of the central protuberance. The polypeptide is Large ribosomal subunit protein uL18 (Methylocella silvestris (strain DSM 15510 / CIP 108128 / LMG 27833 / NCIMB 13906 / BL2)).